The following is a 502-amino-acid chain: Glycerol kinase (502 aa).

Thr14 is a binding site for ADP. 3 residues coordinate ATP: Thr14, Thr15, and Ser16. Residue Thr14 participates in sn-glycerol 3-phosphate binding. Arg18 lines the ADP pocket. Residues Arg84, Glu85, and Tyr136 each contribute to the sn-glycerol 3-phosphate site. Glycerol-binding residues include Arg84, Glu85, and Tyr136. His232 is modified (phosphohistidine; by HPr). Asp246 contributes to the sn-glycerol 3-phosphate binding site. Glycerol is bound by residues Asp246 and Gln247. Residues Thr268 and Gly311 each coordinate ADP. Thr268, Gly311, Gln315, and Gly412 together coordinate ATP. The ADP site is built by Gly412 and Asn416.

This sequence belongs to the FGGY kinase family. In terms of assembly, homotetramer and homodimer (in equilibrium). The phosphoenolpyruvate-dependent sugar phosphotransferase system (PTS), including enzyme I, and histidine-containing protein (HPr) are required for the phosphorylation, which leads to the activation of the enzyme.

It catalyses the reaction glycerol + ATP = sn-glycerol 3-phosphate + ADP + H(+). It participates in polyol metabolism; glycerol degradation via glycerol kinase pathway; sn-glycerol 3-phosphate from glycerol: step 1/1. Activated by phosphorylation and inhibited by fructose 1,6-bisphosphate (FBP). In terms of biological role, key enzyme in the regulation of glycerol uptake and metabolism. Catalyzes the phosphorylation of glycerol to yield sn-glycerol 3-phosphate. This Streptococcus pneumoniae (strain ATCC 700669 / Spain 23F-1) protein is Glycerol kinase.